Consider the following 271-residue polypeptide: Elongation factor Ts (271 aa).

The segment at 76-79 (TDFV) is involved in Mg(2+) ion dislocation from EF-Tu.

The protein belongs to the EF-Ts family.

It is found in the cytoplasm. Its function is as follows. Associates with the EF-Tu.GDP complex and induces the exchange of GDP to GTP. It remains bound to the aminoacyl-tRNA.EF-Tu.GTP complex up to the GTP hydrolysis stage on the ribosome. The chain is Elongation factor Ts from Mycolicibacterium gilvum (strain PYR-GCK) (Mycobacterium gilvum (strain PYR-GCK)).